The chain runs to 681 residues: Macrolide export ATP-binding/permease protein MacB (681 aa).

The region spanning 6-244 is the ABC transporter domain; it reads LKLAAVTRRF…FAEVGVGAAA (239 aa). 42–49 contributes to the ATP binding site; that stretch reads GASGSGKS. Residues 246–274 form a disordered region; sequence TETAADTRSAPASGDAPPPANNDTAADPA. 4 consecutive transmembrane segments (helical) span residues 306–326, 554–574, 611–631, and 644–664; these read LLTMLGIIIGITSVVSIVAVG, LTLLLSLIAVISLVVGGIGVM, LVCLLGGTIGIALSFGLGALF, and AGAIVTAFVCSTLTGVIFGFM.

It belongs to the ABC transporter superfamily. Macrolide exporter (TC 3.A.1.122) family. As to quaternary structure, homodimer.

It localises to the cell inner membrane. In terms of biological role, non-canonical ABC transporter that contains transmembrane domains (TMD), which form a pore in the inner membrane, and an ATP-binding domain (NBD), which is responsible for energy generation. Confers resistance against macrolides. The chain is Macrolide export ATP-binding/permease protein MacB from Burkholderia cenocepacia (strain HI2424).